A 340-amino-acid chain; its full sequence is Uroporphyrinogen decarboxylase (340 aa).

Substrate-binding positions include 21–25, aspartate 71, tyrosine 148, serine 203, and histidine 316; that span reads RQAGR.

It belongs to the uroporphyrinogen decarboxylase family. As to quaternary structure, homodimer.

It is found in the cytoplasm. It catalyses the reaction uroporphyrinogen III + 4 H(+) = coproporphyrinogen III + 4 CO2. It functions in the pathway porphyrin-containing compound metabolism; protoporphyrin-IX biosynthesis; coproporphyrinogen-III from 5-aminolevulinate: step 4/4. Functionally, catalyzes the decarboxylation of four acetate groups of uroporphyrinogen-III to yield coproporphyrinogen-III. In Campylobacter jejuni (strain RM1221), this protein is Uroporphyrinogen decarboxylase.